The sequence spans 546 residues: CTP synthase (546 aa).

The tract at residues 1–266 is amidoligase domain; it reads MTTRYIFVTG…DDLVVKRFGL (266 aa). Ser-14 lines the CTP pocket. Ser-14 is a UTP binding site. Residues 15 to 20 and Asp-72 contribute to the ATP site; that span reads SLGKGI. 2 residues coordinate Mg(2+): Asp-72 and Glu-140. CTP-binding positions include 147-149, 187-192, and Lys-223; these read DIE and KTKPTQ. Residues 187–192 and Lys-223 each bind UTP; that span reads KTKPTQ. ATP is bound at residue 239–241; sequence KDV. In terms of domain architecture, Glutamine amidotransferase type-1 spans 291-542; sequence VIGMVGKYIE…VAAASAHQKR (252 aa). Gly-352 lines the L-glutamine pocket. The Nucleophile; for glutamine hydrolysis role is filled by Cys-379. Residues 380 to 383, Glu-403, and Arg-470 contribute to the L-glutamine site; that span reads LGMQ. Residues His-515 and Glu-517 contribute to the active site.

Belongs to the CTP synthase family. In terms of assembly, homotetramer.

The enzyme catalyses UTP + L-glutamine + ATP + H2O = CTP + L-glutamate + ADP + phosphate + 2 H(+). The catalysed reaction is L-glutamine + H2O = L-glutamate + NH4(+). It carries out the reaction UTP + NH4(+) + ATP = CTP + ADP + phosphate + 2 H(+). It participates in pyrimidine metabolism; CTP biosynthesis via de novo pathway; CTP from UDP: step 2/2. Allosterically activated by GTP, when glutamine is the substrate; GTP has no effect on the reaction when ammonia is the substrate. The allosteric effector GTP functions by stabilizing the protein conformation that binds the tetrahedral intermediate(s) formed during glutamine hydrolysis. Inhibited by the product CTP, via allosteric rather than competitive inhibition. In terms of biological role, catalyzes the ATP-dependent amination of UTP to CTP with either L-glutamine or ammonia as the source of nitrogen. Regulates intracellular CTP levels through interactions with the four ribonucleotide triphosphates. This Shewanella sp. (strain ANA-3) protein is CTP synthase.